Consider the following 350-residue polypeptide: Nicotinate-nucleotide--dimethylbenzimidazole phosphoribosyltransferase (350 aa).

E318 functions as the Proton acceptor in the catalytic mechanism.

It belongs to the CobT family.

The catalysed reaction is 5,6-dimethylbenzimidazole + nicotinate beta-D-ribonucleotide = alpha-ribazole 5'-phosphate + nicotinate + H(+). It functions in the pathway nucleoside biosynthesis; alpha-ribazole biosynthesis; alpha-ribazole from 5,6-dimethylbenzimidazole: step 1/2. In terms of biological role, catalyzes the synthesis of alpha-ribazole-5'-phosphate from nicotinate mononucleotide (NAMN) and 5,6-dimethylbenzimidazole (DMB). The chain is Nicotinate-nucleotide--dimethylbenzimidazole phosphoribosyltransferase from Citrifermentans bemidjiense (strain ATCC BAA-1014 / DSM 16622 / JCM 12645 / Bem) (Geobacter bemidjiensis).